Consider the following 272-residue polypeptide: 3-methyl-2-oxobutanoate hydroxymethyltransferase (272 aa).

Residues D43 and D82 each coordinate Mg(2+). 3-methyl-2-oxobutanoate-binding positions include 43-44 (DS), D82, and K112. E114 serves as a coordination point for Mg(2+). E179 functions as the Proton acceptor in the catalytic mechanism.

This sequence belongs to the PanB family. As to quaternary structure, homodecamer; pentamer of dimers. The cofactor is Mg(2+).

It localises to the cytoplasm. The catalysed reaction is 3-methyl-2-oxobutanoate + (6R)-5,10-methylene-5,6,7,8-tetrahydrofolate + H2O = 2-dehydropantoate + (6S)-5,6,7,8-tetrahydrofolate. Its pathway is cofactor biosynthesis; (R)-pantothenate biosynthesis; (R)-pantoate from 3-methyl-2-oxobutanoate: step 1/2. Its function is as follows. Catalyzes the reversible reaction in which hydroxymethyl group from 5,10-methylenetetrahydrofolate is transferred onto alpha-ketoisovalerate to form ketopantoate. The chain is 3-methyl-2-oxobutanoate hydroxymethyltransferase from Staphylococcus aureus (strain Newman).